The sequence spans 127 residues: Glycine cleavage system H protein (127 aa).

Residues 23–104 (TALVGLTDYA…PYEAWFAKIT (82 aa)) form the Lipoyl-binding domain. Position 64 is an N6-lipoyllysine (lysine 64).

The protein belongs to the GcvH family. In terms of assembly, the glycine cleavage system is composed of four proteins: P, T, L and H. The cofactor is (R)-lipoate.

In terms of biological role, the glycine cleavage system catalyzes the degradation of glycine. The H protein shuttles the methylamine group of glycine from the P protein to the T protein. The polypeptide is Glycine cleavage system H protein (Lachnoclostridium phytofermentans (strain ATCC 700394 / DSM 18823 / ISDg) (Clostridium phytofermentans)).